We begin with the raw amino-acid sequence, 103 residues long: Seminal ribonuclease (103 aa).

4 disulfide bridges follow: Cys-12–Cys-70, Cys-26–Cys-81, Cys-44–Cys-96, and Cys-51–Cys-58. Residues 27-31 (KLVNT), Lys-52, and Arg-71 contribute to the substrate site.

This sequence belongs to the pancreatic ribonuclease family. In terms of assembly, homodimer; disulfide-linked.

The protein localises to the secreted. The catalysed reaction is an [RNA] containing cytidine + H2O = an [RNA]-3'-cytidine-3'-phosphate + a 5'-hydroxy-ribonucleotide-3'-[RNA].. It carries out the reaction an [RNA] containing uridine + H2O = an [RNA]-3'-uridine-3'-phosphate + a 5'-hydroxy-ribonucleotide-3'-[RNA].. Functionally, this enzyme hydrolyzes both single- and double-stranded RNA. This Cephalophus silvicultor (Yellow-backed duiker) protein is Seminal ribonuclease (SRN).